Consider the following 378-residue polypeptide: Lysocardiolipin acyltransferase 1 (378 aa).

Transmembrane regions (helical) follow at residues 9–29 and 46–66; these read FVVA…GPFL and IVAT…GAKV. Residues 85–90 carry the HXXXXD motif motif; that stretch reads HRTRMD. 2 helical membrane-spanning segments follow: residues 302–322 and 336–358; these read LRVL…PMGT and FAAM…LIEL.

It belongs to the 1-acyl-sn-glycerol-3-phosphate acyltransferase family.

The protein resides in the endoplasmic reticulum membrane. The enzyme catalyses a 1-acyl-sn-glycero-3-phosphate + an acyl-CoA = a 1,2-diacyl-sn-glycero-3-phosphate + CoA. It catalyses the reaction a 1-acyl-sn-glycero-3-phospho-(1D-myo-inositol) + an acyl-CoA = a 1,2-diacyl-sn-glycero-3-phospho-(1D-myo-inositol) + CoA. The catalysed reaction is 1-acyl-sn-glycero-3-phospho-(1'-sn-glycerol) + an acyl-CoA = a 1,2-diacyl-sn-glycero-3-phospho-(1'-sn-glycerol) + CoA. It carries out the reaction 1-hexadecanoyl-sn-glycero-3-phosphate + (9Z)-octadecenoyl-CoA = 1-hexadecanoyl-2-(9Z-octadecenoyl)-sn-glycero-3-phosphate + CoA. The enzyme catalyses 1-(9Z-octadecenoyl)-sn-glycero-3-phosphate + (9Z)-octadecenoyl-CoA = 1,2-di-(9Z-octadecenoyl)-sn-glycero-3-phosphate + CoA. It catalyses the reaction 1-(9Z,12Z)-octadecadienoyl-sn-glycero-3-phosphate + (9Z)-octadecenoyl-CoA = 1-(9Z,12Z)-octadecadienoyl-2-(9Z)-octadecenoyl-sn-glycero-3-phosphate + CoA. The catalysed reaction is 1-(9Z,12Z,15Z)-octadecatrienoyl-sn-glycero-3-phosphate + (9Z)-octadecenoyl-CoA = 1-(9Z,12Z,15Z)-octadecatrienoyl-2-(9Z)-octadecenoyl-sn-glycero-3-phosphate + CoA. It carries out the reaction 1-(9Z-octadecenoyl)-sn-glycero-3-phosphate + hexadecanoyl-CoA = 1-(9Z)-octadecenoyl-2-hexadecanoyl-sn-glycero-3-phosphate + CoA. The enzyme catalyses 1-(9Z-octadecenoyl)-sn-glycero-3-phosphate + octadecanoyl-CoA = 1-(9Z-octadecenoyl)-2-octadecanoyl-sn-glycero-3-phosphate + CoA. It catalyses the reaction 1-acyl-sn-glycero-3-phospho-(1'-sn-glycerol) + (9Z)-octadecenoyl-CoA = 1-acyl-2-(9Z-octadecenoyl)-sn-glycero-3-phospho-(1'-sn-glycerol) + CoA. The catalysed reaction is a 1-acyl-sn-glycero-3-phospho-(1D-myo-inositol) + (9Z)-octadecenoyl-CoA = a 1-acyl-2-(9Z-octadecenoyl)-sn-glycero-3-phospho-(1D-myo-inositol) + CoA. It carries out the reaction 1-hexadecanoyl-sn-glycero-3-phospho-(1D-myo-inositol) + hexadecanoyl-CoA = 1,2-dihexadecanoyl-sn-glycero-3-phospho-(1D-myo-inositol) + CoA. The enzyme catalyses 1-hexadecanoyl-sn-glycero-3-phospho-(1D-myo-inositol) + octadecanoyl-CoA = 1-hexadecanoyl-2-octadecanoyl-sn-glycero-3-phospho-(1D-myo-inositol) + CoA. It catalyses the reaction 1-hexadecanoyl-sn-glycero-3-phospho-(1D-myo-inositol) + (9Z)-octadecenoyl-CoA = 1-hexadecanoyl-2-(9Z-octadecenoyl)-sn-glycero-3-phospho-(1D-myo-inositol) + CoA. The catalysed reaction is 1-hexadecanoyl-sn-glycero-3-phospho-(1D-myo-inositol) + (9Z,12Z)-octadecadienoyl-CoA = 1-hexadecanoyl-2-(9Z,12Z-octadecadienoyl)-sn-glycero-3-phospho-(1D-myo-inositol) + CoA. It carries out the reaction 1-hexadecanoyl-sn-glycero-3-phospho-(1D-myo-inositol) + (5Z,8Z,11Z,14Z)-eicosatetraenoyl-CoA = 1-hexadecanoyl-2-(5Z,8Z,11Z,14Z-eicosatetraenoyl)-sn-glycero-3-phospho-D-myo-inositol + CoA. The enzyme catalyses 1-hexadecanoyl-sn-glycero-3-phospho-(1'-sn-glycerol) + hexadecanoyl-CoA = 1,2-dihexadecanoyl-sn-glycero-3-phospho-(1'-sn-glycerol) + CoA. It catalyses the reaction 1-hexadecanoyl-sn-glycero-3-phospho-(1'-sn-glycerol) + octadecanoyl-CoA = 1-hexadecanoyl-2-octadecanoyl-sn-glycero-3-phospho-(1'-sn-glycerol) + CoA. The catalysed reaction is 1-hexadecanoyl-sn-glycero-3-phospho-(1'-sn-glycerol) + (9Z)-octadecenoyl-CoA = 1-hexadecanoyl-2-(9Z-octadecenoyl)-sn-glycero-3-phospho-(1'-sn-glycerol) + CoA. It carries out the reaction 1-hexadecanoyl-sn-glycero-3-phospho-(1'-sn-glycerol) + (9Z,12Z)-octadecadienoyl-CoA = 1-hexadecanoyl-2-(9Z,12Z-octadecadienoyl)-sn-glycero-3-phospho-(1'-sn-glycerol) + CoA. The enzyme catalyses 1-tetradecanoyl-sn-glycero-3-phospho-(1'-sn-glycerol) + (9Z)-octadecenoyl-CoA = 1-tetradecanoyl-2-(9Z-octadecenoyl)-sn-glycero-3-phospho-(1'-sn-glycerol) + CoA. It catalyses the reaction 1-octadecanoyl-sn-glycero-3-phospho-(1'-sn-glycerol) + (9Z)-octadecenoyl-CoA = 1-octadecanoyl-2-(9Z-octadecenoyl)-sn-glycero-3-phospho-(1'-sn-glycerol) + CoA. The catalysed reaction is 1-(9Z-octadecenoyl)-sn-glycero-3-phospho-(1'-sn-glycerol) + (9Z)-octadecenoyl-CoA = 1,2-di-(9Z-octadecenoyl)-sn-glycero-3-phospho-(1'-sn-glycerol) + CoA. It carries out the reaction 1-hexadecanoyl-sn-glycero-3-phospho-(1D-myo-inositol) + dodecanoyl-CoA = 1-hexadecanoyl-2-dodecanoyl-sn-glycero-3-phospho-(1D-myo-inositol) + CoA. The enzyme catalyses 1',3'-bis-[1-acyl-sn-glycero-3-phospho]-glycerol + (9Z)-octadecenoyl-CoA = 1'-[1-acyl-2-(9Z)-octadecenoyl-sn-glycero-3-phospho],3'-[1-acyl,2-hydroxy-sn-glycero-3-phospho]-glycerol + CoA. It catalyses the reaction 1'-[1,2-diacyl-sn-glycero-3-phospho],3'-[1-acyl-sn-glycero-3-phospho]-glycerol + (9Z)-octadecenoyl-CoA = 1'-[1,2-diacyl-sn-glycero-3-phospho],3'-[1-acyl,2-(9Z)-octadecenoyl-sn-glycero-3-phospho]-glycerol + CoA. The catalysed reaction is 1'-[1,2-diacyl-sn-glycero-3-phospho],3'-[1-acyl-sn-glycero-3-phospho]-glycerol + (9Z,12Z)-octadecadienoyl-CoA = 1'-[1,2-diacyl-sn-glycero-3-phospho],3'-[1-acyl,2-(9Z,12Z)-octadecadienoyl-sn-glycero-3-phospho]-glycerol + CoA. It carries out the reaction 1'-[1,2-diacyl-sn-glycero-3-phospho],3'-[1-acyl-sn-glycero-3-phospho]-glycerol + dodecanoyl-CoA = 1'-[1,2-diacyl-sn-glycero-3-phospho],3'-[1-acyl,2-dodecanoyl-sn-glycero-3-phospho]-glycerol + CoA. The enzyme catalyses 1',3'-bis-[1-acyl-sn-glycero-3-phospho]-glycerol + dodecanoyl-CoA = 1'-[1-acyl-2-dodecanoyl-sn-glycero-3-phospho],3'-[1-acyl,2-hydroxy-sn-glycero-3-phospho]-glycerol + CoA. It catalyses the reaction a 1-acyl-sn-glycero-3-phosphate + (9Z)-octadecenoyl-CoA = a 1-acyl-2-(9Z-octadecenoyl)-sn-glycero-3-phosphate + CoA. The catalysed reaction is 1',3'-bis-[1-acyl-sn-glycero-3-phospho]-glycerol + (9Z,12Z)-octadecadienoyl-CoA = 1'-[1-acyl-2-(9Z,12Z)-octadecadienoyl-sn-glycero-3-phospho],3'-[1-acyl,2-hydroxy-sn-glycero-3-phospho]-glycerol + CoA. It carries out the reaction 1',3'-bis-[1-acyl-sn-glycero-3-phospho]-glycerol + hexadecanoyl-CoA = 1'-[1-acyl-2-hexadecanoyl-sn-glycero-3-phospho],3'-[1-acyl,2-hydroxy-sn-glycero-3-phospho]-glycerol + CoA. The enzyme catalyses 1',3'-bis-[1-acyl-sn-glycero-3-phospho]-glycerol + octadecanoyl-CoA = 1'-[1-acyl-2-octadecanoyl-sn-glycero-3-phospho],3'-[1-acyl,2-hydroxy-sn-glycero-3-phospho]-glycerol + CoA. It catalyses the reaction 1'-[1,2-diacyl-sn-glycero-3-phospho],3'-[1-acyl-sn-glycero-3-phospho]-glycerol + octanoyl-CoA = 1'-[1,2-diacyl-sn-glycero-3-phospho],3'-[1-acyl,2-octanoyl-sn-glycero-3-phospho]-glycerol + CoA. The catalysed reaction is 1',3'-bis-[1-acyl-sn-glycero-3-phospho]-glycerol + octanoyl-CoA = 1'-[1-acyl-2-octanoyl-sn-glycero-3-phospho],3'-[1-acyl,2-hydroxy-sn-glycero-3-phospho]-glycerol + CoA. It carries out the reaction 1'-[1,2-diacyl-sn-glycero-3-phospho],3'-[1-acyl-sn-glycero-3-phospho]-glycerol + hexadecanoyl-CoA = 1'-[1,2-diacyl-sn-glycero-3-phospho],3'-[1-acyl,2-hexadecanoyl-sn-glycero-3-phospho]-glycerol + CoA. The enzyme catalyses 1'-[1,2-diacyl-sn-glycero-3-phospho],3'-[1-acyl-sn-glycero-3-phospho]-glycerol + (5Z,8Z,11Z,14Z)-eicosatetraenoyl-CoA = 1'-[1,2-diacyl-sn-glycero-3-phospho],3'-[1-acyl,2-(5Z,8Z,11Z,14Z)-eicosatetraenoyl-sn-glycero-3-phospho]-glycerol + CoA. It catalyses the reaction 1',3'-bis-[1-acyl-sn-glycero-3-phospho]-glycerol + (5Z,8Z,11Z,14Z)-eicosatetraenoyl-CoA = 1'-[1-acyl-2-(5Z,8Z,11Z,14Z)-eicosatetraenoyl-sn-glycero-3-phospho],3'-[1-acyl,2-hydroxy-sn-glycero-3-phospho]-glycerol + CoA. The catalysed reaction is a 1-acyl-sn-glycero-3-phospho-(1D-myo-inositol) + octadecanoyl-CoA = a 1-acyl-2-octadecanoyl-sn-glycero-3-phospho-(1D-myo-inositol) + CoA. It carries out the reaction a 2-acyl-sn-glycero-3-phospho-D-myo-inositol + octadecanoyl-CoA = 1-octadecanoyl-2-acyl-sn-glycero-3-phospho-1D-myo-inositol + CoA. The protein operates within phospholipid metabolism; CDP-diacylglycerol biosynthesis; CDP-diacylglycerol from sn-glycerol 3-phosphate: step 2/3. In terms of biological role, exhibits acyl-CoA:lysocardiolipin acyltransferase (ALCAT) activity; catalyzes the reacylation of lyso-cardiolipin to cardiolipin (CL), a key step in CL remodeling. Recognizes both monolysocardiolipin and dilysocardiolipin as substrates with a preference for linoleoyl-CoA and oleoyl-CoA as acyl donors. Also exhibits 1-acyl-sn-glycerol-3-phosphate acyltransferase activity (AGPAT) activity; converts 1-acyl-sn-glycerol-3- phosphate (lysophosphatidic acid or LPA) into 1,2-diacyl-sn-glycerol-3- phosphate (phosphatidic acid or PA) by incorporating an acyl moiety at the sn-2 position of the glycerol backbone. Possesses both lysophosphatidylinositol acyltransferase (LPIAT) and lysophosphatidylglycerol acyltransferase (LPGAT) activities. Required for establishment of the hematopoietic and endothelial lineages. The polypeptide is Lysocardiolipin acyltransferase 1 (LCLAT1) (Gallus gallus (Chicken)).